A 160-amino-acid chain; its full sequence is Cyclic pyranopterin monophosphate synthase (160 aa).

Substrate-binding positions include 75-77 (MCH) and 115-116 (ME). Aspartate 130 is a catalytic residue.

Belongs to the MoaC family. In terms of assembly, homohexamer; trimer of dimers.

It catalyses the reaction (8S)-3',8-cyclo-7,8-dihydroguanosine 5'-triphosphate = cyclic pyranopterin phosphate + diphosphate. The protein operates within cofactor biosynthesis; molybdopterin biosynthesis. In terms of biological role, catalyzes the conversion of (8S)-3',8-cyclo-7,8-dihydroguanosine 5'-triphosphate to cyclic pyranopterin monophosphate (cPMP). The protein is Cyclic pyranopterin monophosphate synthase of Lysinibacillus sphaericus (strain C3-41).